Reading from the N-terminus, the 494-residue chain is NAD(P)H-quinone oxidoreductase subunit 2 B, chloroplastic (494 aa).

14 helical membrane-spanning segments follow: residues 13–33, 39–59, 81–101, 107–127, 131–151, 166–186, 211–231, 243–263, 277–297, 305–325, 336–356, 378–398, 411–433, and 468–488; these read SILP…IDLI, TPWL…ILLF, IFRL…IDYI, ALTE…FLCC, LVTI…LSGY, LLMG…LYGL, MFIS…LVPF, PTPV…ALAT, WHLL…FIAV, MLAY…IAAE, YMLI…LFGL, LSLV…GFFG, LYFL…LKII, and MIIC…IIAI.

It belongs to the complex I subunit 2 family. As to quaternary structure, NDH is composed of at least 16 different subunits, 5 of which are encoded in the nucleus.

The protein resides in the plastid. Its subcellular location is the chloroplast thylakoid membrane. It catalyses the reaction a plastoquinone + NADH + (n+1) H(+)(in) = a plastoquinol + NAD(+) + n H(+)(out). It carries out the reaction a plastoquinone + NADPH + (n+1) H(+)(in) = a plastoquinol + NADP(+) + n H(+)(out). NDH shuttles electrons from NAD(P)H:plastoquinone, via FMN and iron-sulfur (Fe-S) centers, to quinones in the photosynthetic chain and possibly in a chloroplast respiratory chain. The immediate electron acceptor for the enzyme in this species is believed to be plastoquinone. Couples the redox reaction to proton translocation, and thus conserves the redox energy in a proton gradient. The protein is NAD(P)H-quinone oxidoreductase subunit 2 B, chloroplastic of Angiopteris evecta (Mule's foot fern).